Consider the following 221-residue polypeptide: GTP-binding nuclear protein Ran-3 (221 aa).

The Small GTPase Ran-type domain occupies 10–174 (DYPSFKLVIV…LYLARKLAGD (165 aa)). Residue 21 to 28 (DGGTGKTT) participates in GTP binding. Residues 40-48 (KKYEPTIGV) are switch-I. GTP contacts are provided by residues glycine 71, 125–128 (NKVD), and 153–155 (SAK). The interval 71–87 (GQEKFGGLRDGYYIHGQ) is switch-II. The segment at 201 to 221 (EAELAAAASQPLPDDDDDTFE) is disordered.

This sequence belongs to the small GTPase superfamily. Ran family. In terms of assembly, found in a nuclear export complex with RanGTP, exportin and pre-miRNA. Interacts with RanBP1a and RanBP1b. Interacts with KPNB1.

It is found in the nucleus. Its function is as follows. GTP-binding protein involved in nucleocytoplasmic transport. Required for the import of protein into the nucleus and also for RNA export. Involved in chromatin condensation and control of cell cycle. In Arabidopsis thaliana (Mouse-ear cress), this protein is GTP-binding nuclear protein Ran-3 (RAN3).